Consider the following 108-residue polypeptide: Evasin P1156 (108 aa).

A signal peptide spans 1-28 (MEVKTYAFLQIAVFIFLGMQIFASLTDA). Disulfide bonds link Cys41/Cys63, Cys45/Cys65, and Cys56/Cys76. N-linked (GlcNAc...) asparagine glycosylation is present at Asn44. Residues 89 to 108 (NPSDSEIEAAKPKRSDTLSH) are disordered. Positions 96-108 (EAAKPKRSDTLSH) are enriched in basic and acidic residues.

It is found in the secreted. Salivary chemokine-binding protein which has chemokine-neutralizing activity and binds to host chemokines CXCL1, CXCL2, CXCL3, CXCL5, CXCL6 and CXCL8. This chain is Evasin P1156, found in Ixodes ricinus (Common tick).